The following is a 492-amino-acid chain: AAA-ATPase At3g28520 (492 aa).

The chain crosses the membrane as a helical span at residues 7-25 (IWGFTSTTMASIMFLWPMY). An ATP-binding site is contributed by 249 to 256 (GPPGTGKS). Disordered regions lie at residues 313-334 (KKKKEEDEDKEEKKEAENLKRV) and 462-492 (KIEKEARKNKKKAEDNVKQEKQNKVKGMVTK). Composition is skewed to basic and acidic residues over residues 323 to 332 (EEKKEAENLK) and 462 to 484 (KIEKEARKNKKKAEDNVKQEKQN).

The protein belongs to the AAA ATPase family. BCS1 subfamily. Mg(2+) is required as a cofactor.

The protein resides in the membrane. It carries out the reaction ATP + H2O = ADP + phosphate + H(+). This is AAA-ATPase At3g28520 from Arabidopsis thaliana (Mouse-ear cress).